The chain runs to 949 residues: Valine--tRNA ligase (949 aa).

Positions 40–50 (PNVTGSLHMGH) match the 'HIGH' region motif. The 'KMSKS' region motif lies at 553–557 (KMSKS). Residue lysine 556 coordinates ATP. A coiled-coil region spans residues 877–949 (MAGLIDKEAE…QEQQDKIKAL (73 aa)).

This sequence belongs to the class-I aminoacyl-tRNA synthetase family. ValS type 1 subfamily. As to quaternary structure, monomer.

The protein resides in the cytoplasm. The catalysed reaction is tRNA(Val) + L-valine + ATP = L-valyl-tRNA(Val) + AMP + diphosphate. Catalyzes the attachment of valine to tRNA(Val). As ValRS can inadvertently accommodate and process structurally similar amino acids such as threonine, to avoid such errors, it has a 'posttransfer' editing activity that hydrolyzes mischarged Thr-tRNA(Val) in a tRNA-dependent manner. The sequence is that of Valine--tRNA ligase from Idiomarina loihiensis (strain ATCC BAA-735 / DSM 15497 / L2-TR).